A 134-amino-acid polypeptide reads, in one-letter code: Large ribosomal subunit protein uL16c (134 aa).

A disordered region spans residues 1 to 22; that stretch reads MLSPKRTRFRKQHRGRMKGISH.

This sequence belongs to the universal ribosomal protein uL16 family. Part of the 50S ribosomal subunit.

It is found in the plastid. The protein resides in the chloroplast. The polypeptide is Large ribosomal subunit protein uL16c (Nicotiana tomentosiformis (Tobacco)).